An 810-amino-acid chain; its full sequence is Fibroblast growth factor receptor 1-A (810 aa).

Residues 1-26 (MKMMMIMKTTLLLISVLLTQALQSQG) form the signal peptide. The Extracellular segment spans residues 27 to 363 (RPAIQDEAPA…TQLPNQTYLE (337 aa)). Ig-like C2-type domains follow at residues 28–115 (PAIQ…FNIS), 147–235 (PDKM…YQLD), and 244–346 (PILQ…AWLT). A disulfide bridge connects residues Cys-53 and Cys-99. N-linked (GlcNAc...) asparagine glycans are attached at residues Asn-107, Asn-113, Asn-216, Asn-229, Asn-253, Asn-285, Asn-306, Asn-319, and Asn-358. Cys-167 and Cys-219 are oxidised to a cystine. Cysteines 266 and 330 form a disulfide. The helical transmembrane segment at 364-384 (VLIYCVGFFLICVMVGTAVLA) threads the bilayer. Over 385-810 (KMHSSAKKSD…PNRGVAFKKR (426 aa)) the chain is Cytoplasmic. Phosphotyrosine; by autocatalysis is present on Tyr-450. Residues 465-754 (LVLGKPLGEG…LSMTSNQEYL (290 aa)) enclose the Protein kinase domain. Residues 471–477 (LGEGCFG), Lys-501, 549–551 (EFA), and Asn-555 each bind ATP. 2 positions are modified to phosphotyrosine; by autocatalysis: Tyr-570 and Tyr-572. Asp-610 functions as the Proton acceptor in the catalytic mechanism. ATP-binding residues include Arg-614 and Asp-628. 4 positions are modified to phosphotyrosine; by autocatalysis: Tyr-640, Tyr-641, Tyr-717, and Tyr-753. The tract at residues 787–810 (AGADEPCLPKFPPHPNRGVAFKKR) is disordered.

It belongs to the protein kinase superfamily. Tyr protein kinase family. Fibroblast growth factor receptor subfamily. As to quaternary structure, monomer. Homodimer after ligand binding. Interacts with cnpy1. Post-translationally, autophosphorylated. Binding of FGF family members together with heparan sulfate proteoglycan or heparin promotes receptor dimerization and autophosphorylation on tyrosine residues. Autophosphorylation occurs in trans between the two FGFR molecules present in the dimer and proceeds in a highly ordered manner. Phosphotyrosine residues provide docking sites for interacting proteins and so are crucial for FGFR1 function and its regulation. Ubiquitinated. FGFR1 is rapidly ubiquitinated after autophosphorylation, leading to internalization and degradation. In terms of processing, N-glycosylated in the endoplasmic reticulum. The N-glycan chains undergo further maturation to an Endo H-resistant form in the Golgi apparatus. Initially expressed in adaxial mesoderm with transcripts distinctly localized to the anterior portion of each half-somite. Hereupon, also strongly expressed in the otic vesicles, branchial arches and the brain, especially at the midbrain-hindbrain boundary (MHB).

It is found in the cell membrane. The protein resides in the nucleus. Its subcellular location is the cytoplasm. The protein localises to the cytosol. It localises to the cytoplasmic vesicle. The catalysed reaction is L-tyrosyl-[protein] + ATP = O-phospho-L-tyrosyl-[protein] + ADP + H(+). Present in an inactive conformation in the absence of bound ligand. Ligand binding leads to dimerization and activation by sequential autophosphorylation on tyrosine residues. Tyrosine-protein kinase that acts as a cell-surface receptor for fibroblast growth factors and plays an essential role in the regulation of embryonic development, cell proliferation, differentiation and migration. Required for normal mesoderm patterning and normal skeletogenesis. Phosphorylates PLCG1, FRS2, GAB1 and SHB. Ligand binding leads to the activation of several signaling cascades. Activation of PLCG1 leads to the production of the cellular signaling molecules diacylglycerol and inositol-1,4,5-trisphosphate. Phosphorylation of FRS2 triggers recruitment of GRB2, GAB1, PIK3R1 and SOS1, and mediates activation of RAS, MAPK1/ERK2, MAPK3/ERK1 and the MAP kinase signaling pathway, as well as of the AKT1 signaling pathway. Promotes phosphorylation of SHC1, STAT1 and PTPN11/SHP2. In the nucleus, enhances RPS6KA1 and CREB1 activity and contributes to the regulation of transcription. FGFR1 signaling is down-regulated by ubiquitination, internalization and degradation. In Danio rerio (Zebrafish), this protein is Fibroblast growth factor receptor 1-A (fgfr1a).